A 678-amino-acid chain; its full sequence is Putative pentatricopeptide repeat-containing protein At3g18840 (678 aa).

16 PPR repeats span residues 22 to 56 (TAVSSNQLVNLYSKSGLLREARNVFDEMLERNVYS), 57 to 84 (WNAVIAAYVKFNNVKEARELFESDNCER), 85 to 116 (DLITYNTLLSGFAKTDGCESEAIEMFGEMHRK), 124 to 158 (DDFTVTTMVKLSAKLTNVFYGEQLHGVLVKTGNDG), 159 to 190 (TKFAVSSLIHMYSKCGKFKEVCNIFNGSCVEF), 192 to 222 (DSVARNAMIAAYCREGDIDKALSVFWRNPEL), 224 to 258 (DTISWNTLIAGYAQNGYEEEALKMAVSMEENGLKW), 259 to 293 (DEHSFGAVLNVLSSLKSLKIGKEVHARVLKNGSYS), 294 to 324 (NKFVSSGIVDVYCKCGNMKYAESAHLLYGFG), 325 to 359 (NLYSASSMIVGYSSQGKMVEAKRLFDSLSEKNLVV), 360 to 390 (WTAMFLGYLNLRQPDSVLELARAFIANETNT), 392 to 426 (DSLVMVSVLGACSLQAYMEPGKEIHGHSLRTGILM), 427 to 457 (DKKLVTAFVDMYSKCGNVEYAERIFDSSFER), 458 to 492 (DTVMYNAMIAGCAHHGHEAKSFQHFEDMTEGGFKP), 493 to 528 (DEITFMALLSACRHRGLVLEGEKYFKSMIEAYNISP), and 529 to 563 (ETGHYTCMIDLYGKAYRLDKAIELMEGIDQVEKDA). The segment at 565–640 (ILGAFLNACS…FSGCSWANID (76 aa)) is type E motif. The type E(+) motif stretch occupies residues 641-671 (KQFHMFTSSDISHYETEAIYAMLHFVTKDLS).

The protein belongs to the PPR family. PCMP-E subfamily.

The chain is Putative pentatricopeptide repeat-containing protein At3g18840 (PCMP-E92) from Arabidopsis thaliana (Mouse-ear cress).